A 286-amino-acid polypeptide reads, in one-letter code: Beta-lactamase SHV-5 (286 aa).

Residues 1–21 (MRYIRLCIISLLATLPLAVHA) form the signal peptide. Ser66 (acyl-ester intermediate) is an active-site residue. Residues Cys73 and Cys119 are joined by a disulfide bond. Glu164 acts as the Proton acceptor in catalysis. Residue 230–232 (KTG) coordinates substrate.

Belongs to the class-A beta-lactamase family.

It carries out the reaction a beta-lactam + H2O = a substituted beta-amino acid. Its function is as follows. SHV enzymes hydrolyze broad spectrum cephalosporins notably cefotaxime and ceftazidime. SHV-5 causes particularly high levels of resistance to aztreonam and ceftazidime. The sequence is that of Beta-lactamase SHV-5 (bla) from Klebsiella pneumoniae.